We begin with the raw amino-acid sequence, 1358 residues long: DNA-directed RNA polymerase subunit beta (1358 aa).

This sequence belongs to the RNA polymerase beta chain family. The RNAP catalytic core consists of 2 alpha, 1 beta, 1 beta' and 1 omega subunit. When a sigma factor is associated with the core the holoenzyme is formed, which can initiate transcription.

The enzyme catalyses RNA(n) + a ribonucleoside 5'-triphosphate = RNA(n+1) + diphosphate. Its function is as follows. DNA-dependent RNA polymerase catalyzes the transcription of DNA into RNA using the four ribonucleoside triphosphates as substrates. The chain is DNA-directed RNA polymerase subunit beta from Francisella tularensis subsp. holarctica (strain FTNF002-00 / FTA).